The primary structure comprises 561 residues: Arf-GAP domain and FG repeat-containing protein 1 (561 aa).

Residues 11–135 form the Arf-GAP domain; sequence EKHLKMLRDM…WYVPPEQAKV (125 aa). The C4-type zinc finger occupies 29 to 52; the sequence is CFDCDQRGPTYVNMTVGSFVCTSC. Ser-167 carries the phosphoserine modification. The interval 171 to 193 is disordered; that stretch reads LHLNKGTPTQSPVVGRSQGQQQE. The segment covering 176–191 has biased composition (polar residues); that stretch reads GTPTQSPVVGRSQGQQ. Residue Thr-177 is modified to Phosphothreonine. A phosphoserine mark is found at Ser-181 and Ser-362. O-linked (GlcNAc) serine glycosylation occurs at Ser-367. The interval 409–451 is disordered; it reads PVGASPQTQPASSGPAPFGATPSTNPFVAATGPSAASSTNPFQ. Over residues 442–451 the composition is skewed to polar residues; it reads SAASSTNPFQ.

In terms of assembly, interacts with EPS15R and EPS15. Interacts with FCHO1. In terms of processing, O-glycosylated.

Its subcellular location is the nucleus. The protein resides in the cytoplasmic vesicle. Functionally, required for vesicle docking or fusion during acrosome biogenesis. May play a role in RNA trafficking or localization. This chain is Arf-GAP domain and FG repeat-containing protein 1 (Agfg1), found in Rattus norvegicus (Rat).